The primary structure comprises 141 residues: Nucleoside diphosphate kinase (141 aa).

Residues K11, F59, R87, T93, R104, and N114 each contribute to the ATP site. The Pros-phosphohistidine intermediate role is filled by H117.

The protein belongs to the NDK family. Homotetramer. It depends on Mg(2+) as a cofactor.

It localises to the cytoplasm. The catalysed reaction is a 2'-deoxyribonucleoside 5'-diphosphate + ATP = a 2'-deoxyribonucleoside 5'-triphosphate + ADP. The enzyme catalyses a ribonucleoside 5'-diphosphate + ATP = a ribonucleoside 5'-triphosphate + ADP. Major role in the synthesis of nucleoside triphosphates other than ATP. The ATP gamma phosphate is transferred to the NDP beta phosphate via a ping-pong mechanism, using a phosphorylated active-site intermediate. This is Nucleoside diphosphate kinase from Leptothrix cholodnii (strain ATCC 51168 / LMG 8142 / SP-6) (Leptothrix discophora (strain SP-6)).